We begin with the raw amino-acid sequence, 51 residues long: Large ribosomal subunit protein eL39 (51 aa).

Belongs to the eukaryotic ribosomal protein eL39 family.

The chain is Large ribosomal subunit protein eL39 from Pyrobaculum neutrophilum (strain DSM 2338 / JCM 9278 / NBRC 100436 / V24Sta) (Thermoproteus neutrophilus).